We begin with the raw amino-acid sequence, 164 residues long: Ubiquitin-fold modifier-conjugating enzyme 1 (164 aa).

The active-site Glycyl thioester intermediate is Cys116.

It belongs to the ubiquitin-conjugating enzyme family. UFC1 subfamily.

E2-like enzyme which forms an intermediate with UFM1 via a thioester linkage. The sequence is that of Ubiquitin-fold modifier-conjugating enzyme 1 from Drosophila willistoni (Fruit fly).